The chain runs to 547 residues: CAP-Gly domain-containing linker protein 3 (547 aa).

The tract at residues 1–49 is disordered; sequence MTKTDPAPMAPPPRGEEEEEEEEDEPVPEAPSPTQERRQKPVVHPSAPA. The span at 16 to 27 shows a compositional bias: acidic residues; the sequence is EEEEEEEEDEPV. 3 ANK repeats span residues 117 to 158, 160 to 191, and 197 to 229; these read TDMT…LRSR, TNMNALHYAAYFDVPDLVRVLLKGARPRVVNS, and NHGSALHIAASSLCLGAAKCLLEHGANPALRNR. In terms of domain architecture, CAP-Gly 1 spans 314–356; that stretch reads GTTEFASGQWVGVELDEPEGKNDGSVGGVRYFICPPKQGLFAS. The tract at residues 365–413 is disordered; it reads DAPPSSVTSTPRTPRMDFSRVTGKGRREHKGKKKTPSSPSLGSLQQRDG. A compositionally biased stretch (low complexity) spans 367–377; sequence PPSSVTSTPRT. Threonine 374 carries the post-translational modification Phosphothreonine. Basic residues predominate over residues 387–399; sequence GKGRREHKGKKKT. The span at 400–410 shows a compositional bias: polar residues; it reads PSSPSLGSLQQ. Residue serine 401 is modified to Phosphoserine. Positions 436–478 constitute a CAP-Gly 2 domain; it reads GKTDFAPGYWYGIELDQPTGKHDGSVFGVRYFTCPPRHGVFAP. The interval 488 to 547 is goLD; sequence STDSPGDSVGAKKVHQVTMTQPKRTFTTVRTPKDIASENSISRLLFCCWFPWMLRAEMQS. Residues cysteine 534 and cysteine 535 are each lipidated (S-palmitoyl cysteine).

In terms of assembly, homodimer. Interacts with AKT1 and AKT2; when AKT1 and AKT2 are phosphorylated and activated, affinity is higher for AKT2. Interacts with ZDHHC13 (via ANK repeats). Interacts with ZDHHC17 (via ANK repeats). Post-translationally, palmitoylation by ZDHHC17 regulates association with the plasma membrane.

The protein localises to the cell membrane. It is found in the cytoplasm. It localises to the golgi apparatus. The protein resides in the golgi stack. Functionally, functions as a cytoplasmic linker protein. Involved in TGN-endosome dynamics. May modulate the cellular compartmentalization of AKT kinase family and promote its cell membrane localization, thereby playing a role in glucose transport in adipocytes. This chain is CAP-Gly domain-containing linker protein 3 (CLIP3), found in Homo sapiens (Human).